Reading from the N-terminus, the 264-residue chain is Small ribosomal subunit protein uS2 (264 aa).

The protein belongs to the universal ribosomal protein uS2 family.

In Synechococcus sp. (strain JA-2-3B'a(2-13)) (Cyanobacteria bacterium Yellowstone B-Prime), this protein is Small ribosomal subunit protein uS2.